We begin with the raw amino-acid sequence, 560 residues long: Oxygen-dependent choline dehydrogenase (560 aa).

8–37 (DYIIIGAGSAGNVLATRLTEDADVSVLLLE) serves as a coordination point for FAD. The active-site Proton acceptor is H475.

This sequence belongs to the GMC oxidoreductase family. FAD serves as cofactor.

The catalysed reaction is choline + A = betaine aldehyde + AH2. It catalyses the reaction betaine aldehyde + NAD(+) + H2O = glycine betaine + NADH + 2 H(+). The protein operates within amine and polyamine biosynthesis; betaine biosynthesis via choline pathway; betaine aldehyde from choline (cytochrome c reductase route): step 1/1. Involved in the biosynthesis of the osmoprotectant glycine betaine. Catalyzes the oxidation of choline to betaine aldehyde and betaine aldehyde to glycine betaine at the same rate. The sequence is that of Oxygen-dependent choline dehydrogenase from Stenotrophomonas maltophilia (strain R551-3).